The chain runs to 276 residues: uncharacterized protein (276 aa).

7 consecutive transmembrane segments (helical) span residues Thr5–Ala25, Pro32–Gly52, Gly64–Val84, Ala104–Leu124, Ile149–Pro169, Leu193–Val213, and Val244–Phe264.

It belongs to the monovalent cation:proton antiporter 2 (CPA2) transporter (TC 2.A.37) family.

The protein localises to the cell membrane. This is an uncharacterized protein from Methylorubrum extorquens (Methylobacterium dichloromethanicum).